A 78-amino-acid polypeptide reads, in one-letter code: Large ribosomal subunit protein bL28 (78 aa).

A disordered region spans residues 1 to 20 (MSRVCQVTGKRPVTGNNRSH).

The protein belongs to the bacterial ribosomal protein bL28 family.

This is Large ribosomal subunit protein bL28 from Vibrio atlanticus (strain LGP32) (Vibrio splendidus (strain Mel32)).